A 496-amino-acid polypeptide reads, in one-letter code: MASLDKNMLLNYVPVYVMLPLGVVSVNNVFEDPEGLKEQLVQLREAGVDGVMVDVWWGIIEQKGPKQYDWSAYKSLFQLVQECGLKLQAIMSFHQCGGNVGDVVNIPIPQWVLDIGESDPDIFYTNRSGTRDKEYLTIGVDNKPIFHGRTAIEVYSDYMKSFRENMSDFLKSEVIIDIEVGLGPAGELRYPSYPQNQGWVFPGIGEFQCYDKYLKAEFKAAAARAGHSEWELPDDAGTYNDVPESTEFFKTNGTYLTEKGKFFLTWYSNQLLNHGDEILDEANKAFLGCKVNLAIKVSGIHWWYKAQNHAAELTAGYYNLDDRDGYRPIAKMVSRHHASLNFTCLEMRDSEQSSDAQSGPQELVQQVLSGGWRENIEVAGENALSRYDATAYNQIILNARPQGVNKDGPPKHRMYGVTYLRLSDELLQQSNFDIFKKFVVKMHADQDYCEDPQEYNHGIPPLKRSEPKIPVDVLNEATKPIPPFPWDSETDMKVDG.

Substrate contacts are provided by Asp-54, His-94, and Asp-102. Glu-187 acts as the Proton donor in catalysis. Lys-296, His-301, and Thr-343 together coordinate substrate. The Proton acceptor role is filled by Glu-381. Substrate-binding positions include 382–383 (NA) and Arg-421.

The protein belongs to the glycosyl hydrolase 14 family.

It catalyses the reaction Hydrolysis of (1-&gt;4)-alpha-D-glucosidic linkages in polysaccharides so as to remove successive maltose units from the non-reducing ends of the chains.. The chain is Beta-amylase (BMY1) from Vigna unguiculata (Cowpea).